The following is a 391-amino-acid chain: Na(+)/H(+) antiporter NhaA (391 aa).

The next 12 helical transmembrane spans lie at 9–29, 36–56, 59–79, 95–115, 123–143, 154–174, 177–197, 213–235, 259–279, 293–313, 329–349, and 364–384; these read FQLEAASGLLLIAAAVLALII, YLYSGLLDVPVAVQIGALNIA, LLLWINDGLMALFFLLIGLEV, ILPATAAVGGMVVPALIYWFI, VAGWAIPTATDIAFALGVLAL, LFLMTLAIIDDLGAIIVIALF, GTLSSVSLLLAAACLVVLIAM, LILWVCVLKSGVHATLAGVALAL, WVAYAILPLFAFANAGVSLAG, IAVGLLLGKTVGVFGLTWLAV, ILGVAILCGIGFTMSLFVGSL, and MGILTGSFFAAVIGYAVTAMA.

It belongs to the NhaA Na(+)/H(+) (TC 2.A.33) antiporter family.

It localises to the cell inner membrane. It carries out the reaction Na(+)(in) + 2 H(+)(out) = Na(+)(out) + 2 H(+)(in). Na(+)/H(+) antiporter that extrudes sodium in exchange for external protons. This is Na(+)/H(+) antiporter NhaA from Pseudomonas putida (strain GB-1).